Consider the following 158-residue polypeptide: Large ribosomal subunit protein uL11 (158 aa).

Belongs to the universal ribosomal protein uL11 family. Part of the ribosomal stalk of the 50S ribosomal subunit. Interacts with L10 and the large rRNA to form the base of the stalk. L10 forms an elongated spine to which L12 dimers bind in a sequential fashion forming a multimeric L10(L12)X complex.

Functionally, forms part of the ribosomal stalk which helps the ribosome interact with GTP-bound translation factors. This is Large ribosomal subunit protein uL11 from Methanospirillum hungatei JF-1 (strain ATCC 27890 / DSM 864 / NBRC 100397 / JF-1).